Consider the following 186-residue polypeptide: Biphenyl dioxygenase subunit beta (186 aa).

The protein belongs to the bacterial ring-hydroxylating dioxygenase beta subunit family. As to quaternary structure, heterohexamer consisting of 3 BphA subunits and 3 BphE subunits. A ferredoxin (BphF) and a ferredoxin reductase (BphG) must be present to obtain activity.

The catalysed reaction is biphenyl + NADH + O2 + H(+) = (2R,3S)-3-phenylcyclohexa-3,5-diene-1,2-diol + NAD(+). It functions in the pathway xenobiotic degradation; biphenyl degradation; 2-hydroxy-2,4-pentadienoate and benzoate from biphenyl: step 1/4. The beta subunit may be responsible for the substrate specificity of the enzyme. The chain is Biphenyl dioxygenase subunit beta (bphE) from Comamonas testosteroni (Pseudomonas testosteroni).